The following is a 364-amino-acid chain: Probable protein disulfide-isomerase A6 (364 aa).

The first 28 residues, 1–28, serve as a signal peptide directing secretion; it reads MKMEMHQIWSRIALASFAFAILFVSVSA. Thioredoxin domains are found at residues 29–137 and 139–256; these read DDVV…TEGG and NVKI…EKSG. Catalysis depends on nucleophile residues Cys-58, Cys-61, Cys-177, and Cys-180. 2 cysteine pairs are disulfide-bonded: Cys-58-Cys-61 and Cys-177-Cys-180.

Belongs to the protein disulfide isomerase family.

The protein localises to the endoplasmic reticulum lumen. The catalysed reaction is Catalyzes the rearrangement of -S-S- bonds in proteins.. This is Probable protein disulfide-isomerase A6 from Medicago sativa (Alfalfa).